Consider the following 390-residue polypeptide: Aspergillopepsin-1 (390 aa).

The signal sequence occupies residues 1–19; it reads MVNTSLLAALTAYAVAVAA. A propeptide spans 20 to 67 (activation peptide); that stretch reads APTAPQVKGFSVNQVAVPKGVYRHPAAQLAKAYGKYHATVPTQVAAAA. One can recognise a Peptidase A1 domain in the interval 84–387; sequence YITQVTVGDD…DASGPRLGFA (304 aa). Catalysis depends on residues Asp-100 and Asp-281.

This sequence belongs to the peptidase A1 family. In terms of assembly, monomer.

It localises to the secreted. It catalyses the reaction Hydrolysis of proteins with broad specificity. Generally favors hydrophobic residues in P1 and P1', but also accepts Lys in P1, which leads to activation of trypsinogen. Does not clot milk.. Inhibited by the microbial peptide pepstatin A. Its function is as follows. Secreted aspartic endopeptidase that allows assimilation of proteinaceous substrates. The scissile peptide bond is attacked by a nucleophilic water molecule activated by two aspartic residues in the active site. Shows a broad primary substrate specificity. Favors hydrophobic residues at the P1 and P1' positions, but also accepts a lysine residue in the P1 position, leading to the activation of trypsinogen and chymotrypsinogen A. Hydrolyzes myoglobin, hemoglobin and other natural proteins. Hydrolyzes equine myoglobin between positions 'Met-1' and 'Gly-2', 'Lys-43' and 'Phe-44', and 'Leu-70' and 'Thr-71'. This chain is Aspergillopepsin-1 (pepA), found in Aspergillus pseudoglaucus (Eurotium repens).